The following is a 375-amino-acid chain: Anhydro-N-acetylmuramic acid kinase 1 (375 aa).

20-27 (GTSFDGVD) is an ATP binding site. Residues 351-375 (APSTTGVAAPVGGGRRSKPGARELS) are disordered.

It belongs to the anhydro-N-acetylmuramic acid kinase family.

It catalyses the reaction 1,6-anhydro-N-acetyl-beta-muramate + ATP + H2O = N-acetyl-D-muramate 6-phosphate + ADP + H(+). The protein operates within amino-sugar metabolism; 1,6-anhydro-N-acetylmuramate degradation. Its pathway is cell wall biogenesis; peptidoglycan recycling. Functionally, catalyzes the specific phosphorylation of 1,6-anhydro-N-acetylmuramic acid (anhMurNAc) with the simultaneous cleavage of the 1,6-anhydro ring, generating MurNAc-6-P. Is required for the utilization of anhMurNAc either imported from the medium or derived from its own cell wall murein, and thus plays a role in cell wall recycling. The polypeptide is Anhydro-N-acetylmuramic acid kinase 1 (Jannaschia sp. (strain CCS1)).